Here is a 444-residue protein sequence, read N- to C-terminus: Probable glycine dehydrogenase (decarboxylating) subunit 1 (444 aa).

Belongs to the GcvP family. N-terminal subunit subfamily. The glycine cleavage system is composed of four proteins: P, T, L and H. In this organism, the P 'protein' is a heterodimer of two subunits.

It catalyses the reaction N(6)-[(R)-lipoyl]-L-lysyl-[glycine-cleavage complex H protein] + glycine + H(+) = N(6)-[(R)-S(8)-aminomethyldihydrolipoyl]-L-lysyl-[glycine-cleavage complex H protein] + CO2. Functionally, the glycine cleavage system catalyzes the degradation of glycine. The P protein binds the alpha-amino group of glycine through its pyridoxal phosphate cofactor; CO(2) is released and the remaining methylamine moiety is then transferred to the lipoamide cofactor of the H protein. The polypeptide is Probable glycine dehydrogenase (decarboxylating) subunit 1 (Chlorobium phaeobacteroides (strain DSM 266 / SMG 266 / 2430)).